The chain runs to 98 residues: NADH-ubiquinone oxidoreductase chain 4L (98 aa).

The next 3 membrane-spanning stretches (helical) occupy residues 1–21, 29–49, and 61–81; these read MSMVYFNIFMAFTVSFVGLLM, SLLCLEGMMLSLFVMMSMTIL, and IILLVFAACEAALGLSLLVMV.

This sequence belongs to the complex I subunit 4L family. As to quaternary structure, core subunit of respiratory chain NADH dehydrogenase (Complex I) which is composed of 45 different subunits.

Its subcellular location is the mitochondrion inner membrane. The enzyme catalyses a ubiquinone + NADH + 5 H(+)(in) = a ubiquinol + NAD(+) + 4 H(+)(out). Core subunit of the mitochondrial membrane respiratory chain NADH dehydrogenase (Complex I) which catalyzes electron transfer from NADH through the respiratory chain, using ubiquinone as an electron acceptor. Part of the enzyme membrane arm which is embedded in the lipid bilayer and involved in proton translocation. The chain is NADH-ubiquinone oxidoreductase chain 4L (MT-ND4L) from Phocarctos hookeri (Hooker's sea lion).